The chain runs to 354 residues: Probable alcohol acetyltransferase (354 aa).

Catalysis depends on charge relay system residues Ser124 and His293.

It belongs to the AB hydrolase superfamily.

In terms of biological role, probable alcohol acetyltransferase that uses acetyl-CoA to synthesize acetate esters from various alcohols. Not involved in the synthesis of ethyl acetate. In Cyberlindnera jadinii (strain ATCC 18201 / CBS 1600 / BCRC 20928 / JCM 3617 / NBRC 0987 / NRRL Y-1542) (Torula yeast), this protein is Probable alcohol acetyltransferase (EAT2).